The chain runs to 1501 residues: RE1-silencing transcription factor A (1501 aa).

Residues 158–180 (FRCKPCQYKAESEEEFVHHIKIH) form a C2H2-type 1 zinc finger. Positions 186–200 (VDNDSKKNPQGKEAD) are enriched in basic and acidic residues. Residues 186 to 209 (VDNDSKKNPQGKEADSSIPEESDI) are disordered. 7 C2H2-type zinc fingers span residues 214–236 (IQCD…LKHH), 246–268 (YKCT…LRNH), 274–296 (YTCS…IRTH), 302–324 (YQCI…MRTH), 330–353 (FKCE…RQVH), 359–381 (LTCP…VELH), and 387–410 (FLCP…KSRH). Disordered regions lie at residues 491-514 (SSTQ…SRKS), 569-612 (SFVK…SVAS), 885-929 (PTKV…VPGD), and 1040-1079 (VAAG…GDEQ). 2 stretches are compositionally biased toward basic and acidic residues: residues 498–512 (KASE…DKSR) and 594–605 (ITEKKEKGKQLD). Positions 1067–1079 (QPTSVQPPGGDEQ) are enriched in polar residues. A C2H2-type 9 zinc finger spans residues 1463–1485 (FVCIFCDRTFRKEEEYTKHLRRH).

The protein resides in the nucleus. The protein localises to the cytoplasm. Its function is as follows. Transcriptional repressor which binds neuron-restrictive silencer element (NRSE) and represses neuronal gene transcription in non-neuronal cells. Plays a role in the early development of the nervous system and is required for proper patterning of the neuroectoderm during gastrulation. This involves the correct speciation of the neuroepithelial domain and adequate development of the non-neural ectoderm. The polypeptide is RE1-silencing transcription factor A (rest-a) (Xenopus laevis (African clawed frog)).